Consider the following 1333-residue polypeptide: Elongator complex protein 1 (1333 aa).

Phosphoserine is present on residues Ser805, Ser1172, and Ser1175. The segment at 886–1333 (VDVNELFNHS…RSQWKLSLLE (448 aa)) is mediates dimerization. The segment at 1175–1209 (SGSEMSGRYSHSNSRISARSSKNRRKAERKKHSLK) is disordered. The segment at 1192 to 1210 (ARSSKNRRKAERKKHSLKE) is required for binding to tRNA. A compositionally biased stretch (basic residues) spans 1195-1207 (SKNRRKAERKKHS).

This sequence belongs to the ELP1/IKA1 family. In terms of assembly, homodimer; dimerization promotes ELP1 stability and elongator complex formation. Component of the elongator complex which consists of ELP1, ELP2, ELP3, ELP4, ELP5 and ELP6. Interacts preferentially with MAP3K14/NIK followed by IKK-alpha and IKK-beta. Post-translationally, phosphorylated. As to expression, in the testis, expression is restricted to germ cells during spermatogenesis with no expression detected in somatic cells such as Sertoli cells or Leydig cells (at protein level). In the ovary, expressed in oocytes of primary, secondary and antral follicles (at protein level). Widely expressed in adult tissues with highest levels in brain and also expressed at all embryonic stages.

The protein localises to the cytoplasm. The protein resides in the nucleus. The protein operates within tRNA modification; 5-methoxycarbonylmethyl-2-thiouridine-tRNA biosynthesis. Its function is as follows. Component of the elongator complex which is required for multiple tRNA modifications, including mcm5U (5-methoxycarbonylmethyl uridine), mcm5s2U (5-methoxycarbonylmethyl-2-thiouridine), and ncm5U (5-carbamoylmethyl uridine). The elongator complex catalyzes the formation of carboxymethyluridine in the wobble base at position 34 in tRNAs. Regulates the migration and branching of projection neurons in the developing cerebral cortex, through a process depending on alpha-tubulin acetylation. ELP1 binds to tRNA, mediating interaction of the elongator complex with tRNA. May act as a scaffold protein that assembles active IKK-MAP3K14 complexes (IKKA, IKKB and MAP3K14/NIK). The protein is Elongator complex protein 1 (Elp1) of Mus musculus (Mouse).